Reading from the N-terminus, the 197-residue chain is Ribonuclease HII (197 aa).

The 189-residue stretch at Lys9–Phe197 folds into the RNase H type-2 domain. A divalent metal cation is bound by residues Asp15, Glu16, and Asp107.

The protein belongs to the RNase HII family. The cofactor is Mn(2+). It depends on Mg(2+) as a cofactor.

The protein resides in the cytoplasm. The enzyme catalyses Endonucleolytic cleavage to 5'-phosphomonoester.. Endonuclease that specifically degrades the RNA of RNA-DNA hybrids. In Haemophilus influenzae (strain PittEE), this protein is Ribonuclease HII.